Consider the following 307-residue polypeptide: 4-hydroxy-tetrahydrodipicolinate synthase (307 aa).

A pyruvate-binding site is contributed by T57. Catalysis depends on Y145, which acts as the Proton donor/acceptor. The active-site Schiff-base intermediate with substrate is K173. V215 lines the pyruvate pocket.

It belongs to the DapA family. In terms of assembly, homotetramer; dimer of dimers.

Its subcellular location is the cytoplasm. It catalyses the reaction L-aspartate 4-semialdehyde + pyruvate = (2S,4S)-4-hydroxy-2,3,4,5-tetrahydrodipicolinate + H2O + H(+). Its pathway is amino-acid biosynthesis; L-lysine biosynthesis via DAP pathway; (S)-tetrahydrodipicolinate from L-aspartate: step 3/4. Catalyzes the condensation of (S)-aspartate-beta-semialdehyde [(S)-ASA] and pyruvate to 4-hydroxy-tetrahydrodipicolinate (HTPA). The sequence is that of 4-hydroxy-tetrahydrodipicolinate synthase from Leptospira interrogans serogroup Icterohaemorrhagiae serovar copenhageni (strain Fiocruz L1-130).